Here is a 142-residue protein sequence, read N- to C-terminus: Aspartate 1-decarboxylase (142 aa).

S25 functions as the Schiff-base intermediate with substrate; via pyruvic acid in the catalytic mechanism. S25 bears the Pyruvic acid (Ser) mark. T57 serves as a coordination point for substrate. Y58 acts as the Proton donor in catalysis. A substrate-binding site is contributed by 73-75 (GAA).

This sequence belongs to the PanD family. In terms of assembly, heterooctamer of four alpha and four beta subunits. Pyruvate serves as cofactor. Is synthesized initially as an inactive proenzyme, which is activated by self-cleavage at a specific serine bond to produce a beta-subunit with a hydroxyl group at its C-terminus and an alpha-subunit with a pyruvoyl group at its N-terminus.

The protein resides in the cytoplasm. The enzyme catalyses L-aspartate + H(+) = beta-alanine + CO2. Its pathway is cofactor biosynthesis; (R)-pantothenate biosynthesis; beta-alanine from L-aspartate: step 1/1. In terms of biological role, catalyzes the pyruvoyl-dependent decarboxylation of aspartate to produce beta-alanine. The sequence is that of Aspartate 1-decarboxylase from Mycobacterium leprae (strain Br4923).